The following is a 628-amino-acid chain: Choline transporter-like protein 2 (628 aa).

Residues 1-31 (MSSEDLQDHHEIGNEVIKKKGVYTKKKCQDC) lie on the Cytoplasmic side of the membrane. A helical transmembrane segment spans residues 32 to 52 (FFLILFLLFWAGMIVVAAFGV). Residues 53–204 (KNGKPDRIVK…EILTDLTNSW (152 aa)) are Extracellular-facing. N82, N118, N146, and N168 each carry an N-linked (GlcNAc...) asparagine glycan. A helical transmembrane segment spans residues 205 to 225 (RYLIYGALIAMGLGLTWIFLL). A topological domain (cytoplasmic) is located at residue R226. The chain crosses the membrane as a helical span at residues 227 to 247 (FFAGFITWLTVFAAYACLGLL). Topologically, residues 248–282 (TAQVYFQWQDSKDAYENTIPSQRLVMQEKNILALK) are extracellular. The chain crosses the membrane as a helical span at residues 283-303 (VIFIILCVVCGIFALILLALF). The Cytoplasmic portion of the chain corresponds to 304 to 319 (SRIRIAIRIIKECSRA). The helical transmembrane segment at 320 to 340 (IGIMPSIFFFPIFIFLLLCGF) threads the bilayer. Topologically, residues 341–381 (TVYWVYIGVYLATAGSPTYDDQYRFTGYEADSKLQKIQIYH) are extracellular. A helical membrane pass occupies residues 382 to 402 (FFGYLWTFAFILALNQTTIAG). Topologically, residues 403–432 (AISSWYWVQDKKDTPFFPVWSSFFRVIRYH) are cytoplasmic. A helical transmembrane segment spans residues 433–453 (LGSIALGSLILAIVQFIRWVL). Residues 454 to 530 (RFLEKKFKGK…RVAAVNLVSS (77 aa)) lie on the Extracellular side of the membrane. A helical transmembrane segment spans residues 531–551 (FLMFLGRVFITAATVGISLYL). Over 552–559 (LKEHENLS) the chain is Cytoplasmic. Residues 560-580 (FYIIPVILIGFIAFAISTGFM) traverse the membrane as a helical segment. Topologically, residues 581–628 (SVYDMSIDTMLLCFCEDCERNDGSPERPYYMSKSLRKFVDGKGRSKCC) are extracellular.

The protein belongs to the CTL (choline transporter-like) family.

Its subcellular location is the cell membrane. The protein localises to the mitochondrion outer membrane. The enzyme catalyses choline(out) + n H(+)(in) = choline(in) + n H(+)(out). The catalysed reaction is ethanolamine(out) + n H(+)(in) = ethanolamine(in) + n H(+)(out). Its function is as follows. Choline/H+ antiporter, mainly in mitochodria. Also acts as a low-affinity ethanolamine/H+ antiporter, regulating the supply of extracellular ethanolamine (Etn) for the CDP-Etn pathway, redistribute intracellular Etn and balance the CDP-Cho and CDP-Etn arms of the Kennedy pathway. The polypeptide is Choline transporter-like protein 2 (slc44a2) (Dictyostelium discoideum (Social amoeba)).